Here is a 468-residue protein sequence, read N- to C-terminus: RUS family member 1 (468 aa).

A2 bears the N-acetylalanine mark. Residue T49 is modified to Phosphothreonine. Residues 247 to 267 traverse the membrane as a helical segment; sequence LLMLPLVSGCPGFSLGCFFFL.

It belongs to the RUS1 family.

The protein localises to the membrane. The sequence is that of RUS family member 1 (Rusf1) from Pongo abelii (Sumatran orangutan).